Reading from the N-terminus, the 408-residue chain is UV excision repair protein RAD23 homolog B (408 aa).

The 79-residue stretch at 1–79 (MLVTLKTLQQ…VVVMVTKPKA (79 aa)) folds into the Ubiquitin-like domain. Positions 80–111 (VTTPAPATTQQSNSAATTTVSSSTAPAVTQAP) are enriched in low complexity. The disordered stretch occupies residues 80-176 (VTTPAPATTQ…TSGDSSRSNL (97 aa)). Residues 112–122 (APAPASAPTPT) show a composition bias toward pro residues. A compositionally biased stretch (low complexity) spans 123–143 (PVSVTPAPTTASSEPAPASAA). Basic and acidic residues predominate over residues 144-153 (KQEKPAERPV). Positions 154–174 (ETPVATTPTSTDSTSGDSSRS) are enriched in low complexity. Thr-155 and Thr-164 each carry phosphothreonine. Phosphoserine is present on Ser-174. Thr-186 carries the phosphothreonine modification. The UBA 1 domain occupies 188-228 (QSYENMVTEIMSMGYEREQVIAALRASFNNPDRAVEYLLMG). Ser-199 carries the phosphoserine modification. Tyr-202 is modified (phosphotyrosine). The interval 236 to 274 (QAVVDPPPAASTGAPQSSVAAAAATTTATTTTTSSGGHP) is disordered. A compositionally biased stretch (low complexity) spans 255–268 (AAAAATTTATTTTT). One can recognise an STI1 domain in the interval 273-316 (HPLEFLRNQPQFQQMRQIIQQNPSLLPALLQQIGRENPQLLQQI). A UBA 2 domain is found at 363–403 (PQEKEAIERLKALGFPEGLVIQAYFACEKNENLAANFLLQQ).

Belongs to the RAD23 family. In terms of assembly, component of the XPC complex composed of XPC, RAD23B and CETN2. Interacts with NGLY1 and PSMC1. Interacts with ATXN3. Interacts with PSMD4 and PSMC5. Interacts with AMFR. Interacts with VCP; the interaction is indirect and mediated by NGLY1.

Its subcellular location is the nucleus. The protein localises to the cytoplasm. Functionally, multiubiquitin chain receptor involved in modulation of proteasomal degradation. Binds to polyubiquitin chains. Proposed to be capable to bind simultaneously to the 26S proteasome and to polyubiquitinated substrates and to deliver ubiquitinated proteins to the proteasome. May play a role in endoplasmic reticulum-associated degradation (ERAD) of misfolded glycoproteins by association with PNGase and delivering deglycosylated proteins to the proteasome. Its function is as follows. Involved in global genome nucleotide excision repair (GG-NER) by acting as component of the XPC complex. Cooperatively with CETN2 appears to stabilize XPC. May protect XPC from proteasomal degradation. The XPC complex is proposed to represent the first factor bound at the sites of DNA damage and together with other core recognition factors, XPA, RPA and the TFIIH complex, is part of the pre-incision (or initial recognition) complex. The XPC complex recognizes a wide spectrum of damaged DNA characterized by distortions of the DNA helix such as single-stranded loops, mismatched bubbles or single-stranded overhangs. The orientation of XPC complex binding appears to be crucial for inducing a productive NER. XPC complex is proposed to recognize and to interact with unpaired bases on the undamaged DNA strand which is followed by recruitment of the TFIIH complex and subsequent scanning for lesions in the opposite strand in a 5'-to-3' direction by the NER machinery. Cyclobutane pyrimidine dimers (CPDs) which are formed upon UV-induced DNA damage esacpe detection by the XPC complex due to a low degree of structural perurbation. Instead they are detected by the UV-DDB complex which in turn recruits and cooperates with the XPC complex in the respective DNA repair. In vitro, the XPC:RAD23B dimer is sufficient to initiate NER; it preferentially binds to cisplatin and UV-damaged double-stranded DNA and also binds to a variety of chemically and structurally diverse DNA adducts. XPC:RAD23B contacts DNA both 5' and 3' of a cisplatin lesion with a preference for the 5' side. XPC:RAD23B induces a bend in DNA upon binding. XPC:RAD23B stimulates the activity of DNA glycosylases TDG and SMUG1. The polypeptide is UV excision repair protein RAD23 homolog B (RAD23B) (Bos taurus (Bovine)).